A 510-amino-acid polypeptide reads, in one-letter code: Scarecrow-like protein 29 (510 aa).

The tract at residues 90-142 (LDLPPEIQQPNDQSRKRSHDGFLEAQQVKKSARSKRKAIKSSEKSSKDGNKEG) is disordered. Positions 102-111 (QSRKRSHDGF) are enriched in basic and acidic residues. The segment covering 119–128 (KSARSKRKAI) has biased composition (basic residues). Over residues 129 to 142 (KSSEKSSKDGNKEG) the composition is skewed to basic and acidic residues. The region spanning 136–510 (KDGNKEGRWA…EAVSFCSLWK (375 aa)) is the GRAS domain. The leucine repeat I (LRI) stretch occupies residues 143–205 (RWAEKLLNPC…HLSSSSVSSS (63 aa)). The tract at residues 224–294 (LLKFYEVSPW…GPPPRVRITV (71 aa)) is VHIID. The VHIID motif lies at 259 to 263 (LHIID). Residues 312–337 (NYGSQLLGFARSLKINLQISVLDKLQ) are leucine repeat II (LRII). The PFYRE stretch occupies residues 347–435 (LIVCAQFRLH…RKLMEGEATK (89 aa)). The tract at residues 438–510 (MNAGDMNEGK…EAVSFCSLWK (73 aa)) is SAW.

This sequence belongs to the GRAS family. Expressed in seedlings, roots and flowers.

Its subcellular location is the nucleus. Probable transcription factor involved in plant development. This is Scarecrow-like protein 29 (SCL29) from Arabidopsis thaliana (Mouse-ear cress).